Consider the following 785-residue polypeptide: Toll-like receptor 2 (785 aa).

The N-terminal stretch at 1 to 17 (MSRVLWTLWVLGAVTNL) is a signal peptide. Residues 18 to 589 (SKEEAPDQSS…RLSVSECHRT (572 aa)) lie on the Extracellular side of the membrane. Residues Cys-31 and Cys-37 are joined by a disulfide bond. 19 LRR repeats span residues 54–77 (AVRS…RDCV), 78–101 (NLKA…LSLW), 102–125 (SLEH…RPLS), 126–150 (SLKF…SQLT), 151–175 (NLRI…AGLT), 176–199 (FLEE…KSIQ), 200–223 (NISY…DLSS), 224–250 (SLKH…ETHT), 251–278 (LVKK…NYVS), 279–308 (GVLE…KNIG), 309–337 (QIET…SLTE), 338–361 (DVKR…QHLK), 362–388 (SLEY…DAWP), 389–414 (SLQT…LTLK), 415–437 (NLTN…QWPE), 438–457 (KMKY…GCIP), 458–478 (KTLE…LNLP), 479–500 (QLKE…SLLP), and 501–524 (MLLV…DSFH). Asn-115 carries an N-linked (GlcNAc...) asparagine glycan. N-linked (GlcNAc...) asparagine glycosylation is found at Asn-200 and Asn-246. Residues Cys-354 and Cys-383 are joined by a disulfide bond. Asn-415 and Asn-443 each carry an N-linked (GlcNAc...) asparagine glycan. Cys-433 and Cys-455 form a disulfide bridge. An LRRCT domain is found at 525 to 579 (TLKTLEAGGNNFICSCEFLSFTQEQQALAKVLIDWPANYLCDSPSHVRGQQVQDV). A helical transmembrane segment spans residues 590–610 (ALVSGMCCALFLLILLTEVLC). Over 611–785 (HRFHGLWYMR…WLNLRTAIKS (175 aa)) the chain is Cytoplasmic. The region spanning 640 to 783 (VCYDAFVSYS…GFWLNLRTAI (144 aa)) is the TIR domain. Residue Lys-755 forms a Glycyl lysine isopeptide (Lys-Gly) (interchain with G-Cter in ubiquitin) linkage. An ATG16L1-binding motif motif is present at residues 762–779 (YLEWPTDDAQQEGFWLNL).

The protein belongs to the Toll-like receptor family. As to quaternary structure, interacts with LY96, TLR1 and TLR6 (via extracellular domain). TLR2 seems to exist in heterodimers with either TLR1 or TLR6 before stimulation by the ligand. The heterodimers form bigger oligomers in response to their corresponding ligands as well as further heterotypic associations with other receptors such as CD14 and/or CD36. Binds MYD88 (via TIR domain). Interacts with TICAM1. Interacts with CNPY3. Interacts with ATG16L1. Interacts with PPP1R11. Interacts with TICAM2. Interacts with TIRAP. Ubiquitinated at Lys-755 by PPP1R11, leading to its degradation. Deubiquitinated by USP2. In terms of processing, glycosylation of Asn-443 is critical for secretion of the N-terminal ectodomain of TLR2.

Its subcellular location is the membrane. The protein resides in the cytoplasmic vesicle. It is found in the phagosome membrane. The protein localises to the membrane raft. Its function is as follows. Cooperates with LY96 to mediate the innate immune response to bacterial lipoproteins and other microbial cell wall components. Cooperates with TLR1 or TLR6 to mediate the innate immune response to bacterial lipoproteins or lipopeptides. Acts via MYD88 and TRAF6, leading to NF-kappa-B activation, cytokine secretion and the inflammatory response. May also promote apoptosis in response to lipoproteins. Forms activation clusters composed of several receptors depending on the ligand, these clusters trigger signaling from the cell surface and subsequently are targeted to the Golgi in a lipid-raft dependent pathway. Forms the cluster TLR2:TLR6:CD14:CD36 in response to diacylated lipopeptides and TLR2:TLR1:CD14 in response to triacylated lipopeptides. The polypeptide is Toll-like receptor 2 (TLR2) (Canis lupus familiaris (Dog)).